The primary structure comprises 100 residues: Protein SAMBA (100 aa).

The segment at 1–40 is disordered; sequence MNGASPAHSLVSTTAVAGGGGSSGAAAGLDDFHFPPDIPS.

As to quaternary structure, interacts with CDC27B and CYCA2-3. Expressed in embryos, germinating seeds, hypocotyls and pollen grains.

Its function is as follows. Plays an important role in organ size control. Acts as negative regulator of the anaphase-promoting complex/cyclosome (APC/C). Regulates cell proliferation during early development by targeting CYCA2-3 for APC/C-mediated degradation. Required for mitosis I during pollen microspore development. This is Protein SAMBA from Arabidopsis thaliana (Mouse-ear cress).